The chain runs to 118 residues: Large ribosomal subunit protein bL21c (118 aa).

The protein belongs to the bacterial ribosomal protein bL21 family. As to quaternary structure, part of the 50S ribosomal subunit.

It is found in the plastid. Its subcellular location is the chloroplast. In terms of biological role, this protein binds to 23S rRNA. The protein is Large ribosomal subunit protein bL21c of Anthoceros angustus (Hornwort).